A 674-amino-acid polypeptide reads, in one-letter code: Oxidative stress response two-component system protein SSK1 (674 aa).

Residues 66–75 are compositionally biased toward polar residues; the sequence is SPTTLTTPQN. Disordered regions lie at residues 66-115, 259-354, and 372-497; these read SPTT…GTTK, QSSI…SVAT, and ANNN…NDPT. The segment covering 90–99 has biased composition (basic and acidic residues); the sequence is ETTRKNRPDD. A compositionally biased stretch (polar residues) spans 101 to 115; sequence NSITPSNSINSGTTK. A compositionally biased stretch (low complexity) spans 264–276; that stretch reads NNNNNNSNVNNNN. 2 stretches are compositionally biased toward polar residues: residues 302-314 and 323-336; these read MNRSSFSTNNNPV and VSPSNLGVSRNSPV. Composition is skewed to low complexity over residues 343-352 and 372-383; these read SNPVSSPNSV and ANNNSNQASQSS. Positions 391-416 are enriched in basic and acidic residues; sequence VLSEDGSKSVNDKTEEVVSSKLKPND. Low complexity predominate over residues 422 to 433; that stretch reads QAKQQEQQTAEQ. Residues 434–444 are compositionally biased toward polar residues; that stretch reads SENGFSETSAS. Over residues 459 to 481 the composition is skewed to low complexity; the sequence is TKSSTTATTTSSNSISNNNNTSS. One can recognise a Response regulatory domain in the interval 507-653; it reads SVLVVEDNAI…WLQNKITEWG (147 aa). The residue at position 556 (D556) is a 4-aspartylphosphate.

Belongs to the SSK1 family.

Final receptor of the SLN1-YPD1-SSK1 two-component regulatory system, which controls activity of the HOG1 pathway in response to oxidative stress and probably also to the osmolarity of the extracellular environment. Involved in cell wall biosynthesis, hyphal growth, and virulence. Regulates the expression of CHK1, as well as of a subset of genes whose functions are associated with cell wall biosynthesis and adaptation to oxidative stress. Provides at least partial adaptive functions for the survival following encounter with human neutrophils. The protein is Oxidative stress response two-component system protein SSK1 (SSK1) of Candida albicans (strain SC5314 / ATCC MYA-2876) (Yeast).